Reading from the N-terminus, the 430-residue chain is Mannosylglucosylglycerate synthase (430 aa).

The protein belongs to the glycosyltransferase group 1 family. The cofactor is a divalent metal cation.

It carries out the reaction (2R)-2-O-(alpha-D-glucopyranosyl)-glycerate + GDP-alpha-D-mannose = (2R)-2-O-[alpha-D-mannopyranosyl-(1-&gt;2)-alpha-D-glucopyranosyl]-glycerate + GDP + H(+). Functionally, involved in the biosynthesis of the compatible solute mannosylglucosylglycerate through a nonphosphorylating pathway. Catalyzes the synthesis of mannosylglucosylglycerate (MGG) from glucosylglycerate (GG) and GDP-mannose. This chain is Mannosylglucosylglycerate synthase, found in Petrotoga mobilis (strain DSM 10674 / SJ95).